We begin with the raw amino-acid sequence, 225 residues long: Probable molybdenum cofactor guanylyltransferase (225 aa).

Residues 20-22 (LAG), Lys-33, Asp-88, and Asp-117 contribute to the GTP site. A Mg(2+)-binding site is contributed by Asp-117.

The protein belongs to the MobA family. Requires Mg(2+) as cofactor.

It localises to the cytoplasm. It carries out the reaction Mo-molybdopterin + GTP + H(+) = Mo-molybdopterin guanine dinucleotide + diphosphate. Transfers a GMP moiety from GTP to Mo-molybdopterin (Mo-MPT) cofactor (Moco or molybdenum cofactor) to form Mo-molybdopterin guanine dinucleotide (Mo-MGD) cofactor. The sequence is that of Probable molybdenum cofactor guanylyltransferase from Methanosarcina acetivorans (strain ATCC 35395 / DSM 2834 / JCM 12185 / C2A).